A 305-amino-acid polypeptide reads, in one-letter code: 2-pyrone-4,6-dicarbaxylate hydrolase (305 aa).

Substrate contacts are provided by residues 32-34 (HCH), Tyr50, Thr78, Arg125, Arg131, Tyr158, and His182. Asp258 serves as the catalytic Proton acceptor. Asn263 is a binding site for substrate.

It belongs to the metallo-dependent hydrolases superfamily. PDC hydrolase family.

It carries out the reaction 2-oxo-2H-pyran-4,6-dicarboxylate + H2O = (1E)-4-oxobut-1-ene-1,2,4-tricarboxylate + H(+). With respect to regulation, strongly inhibited by 1 mM Zn(2+), Cu(2+), Mn(2+) and Co(2+) ions. Also inhibited by 5,5'-dithiobis(2-nitrobenzoic acid) (Ellman reagent) in vitro. Functionally, involved in the degradation of aromatic compounds via the protocatechuate 4,5-cleavage pathway. Catalyzes the hydrolysis of 2-pyrone-4,6-dicarboxylate (PDC) to oxalomesaconate (OMA). Also catalyzes the reverse reaction. This Comamonas testosteroni (Pseudomonas testosteroni) protein is 2-pyrone-4,6-dicarbaxylate hydrolase.